Reading from the N-terminus, the 394-residue chain is S-adenosylmethionine synthase (394 aa).

Residue Glu10 participates in Mg(2+) binding. His16 serves as a coordination point for ATP. Glu44 provides a ligand contact to K(+). Positions 57 and 100 each coordinate L-methionine. ATP contacts are provided by residues Asp168–Lys170, Ser236–Phe239, Asp247, Arg253–Lys254, Ala270, Lys274, and Lys278. Residue Asp247 participates in L-methionine binding. An L-methionine-binding site is contributed by Lys278.

The protein belongs to the AdoMet synthase family. Homotetramer. It depends on Mn(2+) as a cofactor. Mg(2+) is required as a cofactor. Requires Co(2+) as cofactor. The cofactor is K(+).

The protein localises to the cytoplasm. The enzyme catalyses L-methionine + ATP + H2O = S-adenosyl-L-methionine + phosphate + diphosphate. The protein operates within amino-acid biosynthesis; S-adenosyl-L-methionine biosynthesis; S-adenosyl-L-methionine from L-methionine: step 1/1. Catalyzes the formation of S-adenosylmethionine from methionine and ATP. The reaction comprises two steps that are both catalyzed by the same enzyme: formation of S-adenosylmethionine (AdoMet) and triphosphate, and subsequent hydrolysis of the triphosphate. The chain is S-adenosylmethionine synthase (METK) from Medicago truncatula (Barrel medic).